The chain runs to 428 residues: CRISPR system endoribonuclease Csm6 (428 aa).

Residues Met-1 to Thr-145 form a CARF domain region. Residues Glu-146–Glu-428 are HEPN domain.

It belongs to the CRISPR-associated Csm6 family. As to quaternary structure, homodimer. The composite ssRNase active site is formed at the dimer interface.

Non-specific ssRNase activity is allosterically activated about 1000-fold by cyclic hexaadenylate (cA6), a second messenger produced by Cas10 of the ternary Csm effector complex in the presence of a cognate target RNA. ssRNase activity is inhibited by physiological concentrations of ATP (1 mM), activity is restored by cOA. CRISPR (clustered regularly interspaced short palindromic repeat) is an adaptive immune system that provides protection against mobile genetic elements (viruses, transposable elements and conjugative plasmids). CRISPR clusters contain spacers, sequences complementary to antecedent mobile elements, and target invading nucleic acids. CRISPR clusters are transcribed and processed into CRISPR RNA (crRNA). The type III-A Csm complex binds crRNA and acts as a crRNA-guided RNase, DNase and cyclic oligoadenylate synthase; binding of target RNA cognate to the crRNA is required for all activities. In a heterologous host this Csm effector complex restricts ssRNA phage MS2, suggesting it may target RNA viruses in vivo. This protein is not part of the Csm complex. Its function is as follows. Csm functions as a non-specific ssDNase. Base-pairing between crRNA and target RNA to form a ternary Csm complex activates a ssDNase activity; target RNA cleavage suppresses the ssDNase, a temporal control that prevents uncontrolled DNA degradation. Viral RNA transcripts probably tether the Csm complex to the viral genome, recruiting Cas10 ssDNA activity which is able to degrade DNA in the transcription bubble, spatially controlling the DNase activity. Functionally, a single-strand-specific endoribonuclease (ssRNase) that is approximately 1000-fold stimulated by cyclic oligoadenylate (cOA); although several species of cOA are synthesized by this organism only cyclic hexaadenylate (cA6) stimulates the ssRNase activity. Cleaves preferentially within GA or AA dinucleotides, although the presence of cA6 broadens the preference. Linear oligoadenylates do not activate the RNase. This Streptococcus thermophilus protein is CRISPR system endoribonuclease Csm6.